Consider the following 5005-residue polypeptide: Bridge-like lipid transfer protein family member 1 (5005 aa).

Residues 27-47 (VVWLLVATILSCGWIIYLTYY) form a helical membrane-spanning segment. Disordered regions lie at residues 692–718 (RPAQ…PSEL) and 1205–1314 (KSVG…ASVC). A compositionally biased stretch (pro residues) spans 708–718 (SPRPPVDPSEL). The span at 1205–1215 (KSVGIEGERKT) shows a compositional bias: basic and acidic residues. Low complexity predominate over residues 1226–1240 (SHSSSSSSEENSSSS). The span at 1248–1275 (GEKESPSSAADDHSVQKDLLHSARRDDG) shows a compositional bias: basic and acidic residues. Over residues 1278–1303 (SVPTEISGTSPVSPNTQDKSVGQSPL) the composition is skewed to polar residues. 3 positions are modified to phosphoserine: Ser-1301, Ser-1305, and Ser-1323. Residue Thr-1325 is modified to Phosphothreonine. 4 disordered regions span residues 1343-1376 (SDVS…SNSF), 1399-1425 (EEFE…QMQQ), 1521-1544 (TNKR…SEES), and 1676-1698 (FSEN…MIGT). Phosphoserine occurs at positions 1355 and 1406. Residues 1521–1530 (TNKRTSKSSL) show a composition bias toward basic residues. Over residues 1684–1693 (QDIRGTKTEH) the composition is skewed to basic and acidic residues. Residues Ser-1805 and Ser-1808 each carry the phosphoserine modification. Disordered stretches follow at residues 1927-1991 (RGGV…PLMP), 2165-2192 (PAQP…GGLQ), 2265-2288 (TSGD…KESP), 2367-2387 (ESPV…PNLP), 2400-2420 (SSDQ…QDDV), and 2598-2677 (TAGS…KDVV). 2 stretches are compositionally biased toward polar residues: residues 1931–1948 (LTSN…YNTD) and 1959–1971 (TSPS…NSVS). Polar residues-rich tracts occupy residues 2367 to 2379 (ESPV…NSLP), 2400 to 2418 (SSDQ…TSQD), and 2598 to 2608 (TAGSASPTPTF). Phosphoserine occurs at positions 2601 and 2603. The segment covering 2619 to 2638 (SDFSRSSRGSLNGGNRVNNA) has biased composition (low complexity). Over residues 2643-2665 (ANNENNKKESRNKNSLGRSERRT) the composition is skewed to basic and acidic residues. Phosphoserine is present on Ser-2755. Positions 2928–2967 (RQPSTAPQPMKEDIATPLPSEKTPTSVNQTPIETNEFPQL) are disordered. The segment covering 2949–2964 (KTPTSVNQTPIETNEF) has biased composition (polar residues). Phosphoserine is present on residues Ser-3562, Glu-3577, and Ser-3653. 6 disordered regions span residues 3614–3662 (YSRS…TFNI), 3686–3744 (SSNS…ERFY), 3821–3843 (RRSY…KKFQ), 3935–3954 (KTNT…KGKG), 4089–4145 (TTYP…SSSS), and 4325–4396 (QSAS…ASQQ). Residues 3686–3711 (SSNSEGSCSVFSSPKTTGGFSPSVPF) are compositionally biased toward polar residues. A compositionally biased stretch (acidic residues) spans 3727–3736 (EDSEKDEKDE). Positions 3821 to 3837 (RRSYDRSSRSLDQDSPS) are enriched in basic and acidic residues. Over residues 4097-4112 (SPGSNAPQTGAKTSAS) the composition is skewed to polar residues. Residues 4117–4145 (PGSSGLGSPLGRSRHSSSQSDLTGSSSSS) are compositionally biased toward low complexity. Ser-4124 is subject to Phosphoserine. Residues 4325 to 4358 (QSASFTHMPQSPNVFNEHMTNNTMSPGTAAQSLK) are compositionally biased toward polar residues. Positions 4359-4372 (SPASIRSRSVSDSS) are enriched in low complexity. A compositionally biased stretch (polar residues) spans 4381 to 4396 (KTSTPVNKSNKAASQQ).

Highly expressed in testis and ovary. Weakly or not expressed in other tissues.

Its subcellular location is the cell membrane. The protein localises to the endoplasmic reticulum membrane. It localises to the mitochondrion membrane. Tube-forming lipid transport protein which provides phosphatidylethanolamine for glycosylphosphatidylinositol (GPI) anchor synthesis in the endoplasmic reticulum. Plays a role in endosomal trafficking and endosome recycling. Also involved in the actin cytoskeleton and cilia structural dynamics. Acts as a regulator of phagocytosis. The sequence is that of Bridge-like lipid transfer protein family member 1 (Bltp1) from Mus musculus (Mouse).